The chain runs to 170 residues: FMRFamide-like neuropeptides 6 (170 aa).

The first 19 residues, 1–19 (MNSRGLILTLGVVIAVAFA), serve as a signal peptide directing secretion. Gln20 carries the post-translational modification Pyrrolidone carboxylic acid. A Phenylalanine amide modification is found at Phe39. Residues 42–51 (SDGGNPMEME) constitute a propeptide that is removed on maturation. At Phe60 the chain carries Phenylalanine amide. Positions 63-81 (RSSGGDEQELVGGDDIDME) are excised as a propeptide. Position 90 is a phenylalanine amide (Phe90). The propeptide occupies 93–104 (RSGPQEDDMPME). A Phenylalanine amide modification is found at Phe113. Residues 116 to 136 (RSSDMEVIGNEGVDGDAHDLF) constitute a propeptide that is removed on maturation. Phe145 carries the phenylalanine amide modification. Residues 148-159 (RSMGEEEDHDMM) constitute a propeptide that is removed on maturation. Positions 150-170 (MGEEEDHDMMKRKSAYMRFGR) are disordered. Positions 159 to 170 (MKRKSAYMRFGR) are enriched in basic residues. Position 168 is a phenylalanine amide (Phe168).

Belongs to the FARP (FMRFamide related peptide) family. Each flp gene is expressed in a distinct set of neurons. Flp-6 is expressed in the ASE sensory neurons, AFD, ASG, PVT and I1 neurons.

It is found in the secreted. Functionally, FMRFamides and FMRFamide-like peptides are neuropeptides. KSAYMRF-amide has an excitatory effect on dissected pharyngeal myogenic muscle system. The chain is FMRFamide-like neuropeptides 6 from Caenorhabditis elegans.